A 574-amino-acid chain; its full sequence is Pescadillo homolog (574 aa).

A disordered region spans residues 289-312 (PSEPNDDTEVDEFPADPENAGLEE). The segment covering 292-303 (PNDDTEVDEFPA) has biased composition (acidic residues). One can recognise a BRCT domain in the interval 323 to 416 (KHKSLFVGLK…LLLPVEDYFP (94 aa)). The disordered stretch occupies residues 452 to 486 (LGLDEEDDDDDDDDEEEDDDDDEEEEDKKLRQLEN). The span at 453–477 (GLDEEDDDDDDDDEEEDDDDDEEEE) shows a compositional bias: acidic residues.

It belongs to the pescadillo family. In terms of assembly, component of the PeBoW complex, composed of bop1, pes1 and wdr12. The complex is held together by bop1, which interacts with pes1 via its N-terminal domain and with wdr12 via a high-affinity interaction between the seven-bladed beta-propeller domains of the 2 proteins. The PeBoW complex associates with the 66S pre-ribosome.

It is found in the nucleus. Its subcellular location is the nucleolus. The protein resides in the nucleoplasm. Functionally, component of the PeBoW complex, which is required for maturation of 28S and 5.8S ribosomal RNAs and formation of the 60S ribosome. Required for neural crest migration and eye development. This is Pescadillo homolog (pes1) from Xenopus laevis (African clawed frog).